Reading from the N-terminus, the 447-residue chain is Na(+)-translocating NADH-quinone reductase subunit A (447 aa).

Belongs to the NqrA family. As to quaternary structure, composed of six subunits; NqrA, NqrB, NqrC, NqrD, NqrE and NqrF.

It carries out the reaction a ubiquinone + n Na(+)(in) + NADH + H(+) = a ubiquinol + n Na(+)(out) + NAD(+). In terms of biological role, NQR complex catalyzes the reduction of ubiquinone-1 to ubiquinol by two successive reactions, coupled with the transport of Na(+) ions from the cytoplasm to the periplasm. NqrA to NqrE are probably involved in the second step, the conversion of ubisemiquinone to ubiquinol. This is Na(+)-translocating NADH-quinone reductase subunit A from Saccharophagus degradans (strain 2-40 / ATCC 43961 / DSM 17024).